Here is a 208-residue protein sequence, read N- to C-terminus: LexA repressor (208 aa).

Positions 28 to 48 (RAEIARQLGFRSANAAEEHLK) form a DNA-binding region, H-T-H motif. Catalysis depends on for autocatalytic cleavage activity residues Ser-125 and Lys-162.

It belongs to the peptidase S24 family. In terms of assembly, homodimer.

The enzyme catalyses Hydrolysis of Ala-|-Gly bond in repressor LexA.. In terms of biological role, represses a number of genes involved in the response to DNA damage (SOS response), including recA and lexA. In the presence of single-stranded DNA, RecA interacts with LexA causing an autocatalytic cleavage which disrupts the DNA-binding part of LexA, leading to derepression of the SOS regulon and eventually DNA repair. In Alteromonas mediterranea (strain DSM 17117 / CIP 110805 / LMG 28347 / Deep ecotype), this protein is LexA repressor.